Reading from the N-terminus, the 153-residue chain is Proline-rich membrane anchor 1 (153 aa).

An N-terminal signal peptide occupies residues M1–G35. Topologically, residues E36–G92 are extracellular. Positions P56–P70 constitute a PRAD domain. Residues P59–R71 are compositionally biased toward pro residues. The tract at residues P59–N79 is disordered. Residue N79 is glycosylated (N-linked (GlcNAc...) asparagine). Residues L93–I113 traverse the membrane as a helical segment. At C114 to V153 the chain is on the cytoplasmic side.

As to quaternary structure, interacts with ACHE, probably through disulfide bonds.

The protein resides in the cell membrane. It localises to the cell junction. The protein localises to the synapse. Functionally, required to anchor acetylcholinesterase (ACHE) to the basal lamina of the neuromuscular junction and to the membrane of neuronal synapses in brain. Also able to organize ACHE into tetramers. This chain is Proline-rich membrane anchor 1 (PRIMA1), found in Homo sapiens (Human).